Here is a 525-residue protein sequence, read N- to C-terminus: MSNIHEHKILILDFGSQYTQLIARRIREIGVYCELWAWDVSEAQIREFNPQGIILAGGPESVTAENSPRAPEYVFNAGVPVLGICYGMQTMSEQLGGKVIQGVGEGEFGYAQVEMLLESALFKGIEDAISPAGRPLLDVWMSHGDKVSAIPEGFKAVAKTDTCPFAAMANEEKRFYGVQFHPEVTHTRQGLRMLEHFAVAICGCGTNWKPSSIIEDAIERIKAQVGDDEVILGLSGGVDSSVVAMLLHRAIGKKLTCVFVDNGLLRLNEAEQVLEMFGDHFGLNIVHVDAENRFLDAMAGVADPEAKRKIIGRVFVEIFDEESKKCANAKWLAQGTIYPDVIESAGSATGKAHVIKSHHNVGGLPDDMEMGLVEPLRELFKDEVRKIGLELGLPYNMLYRHPFPGPGLGVRVLGEVKKEYCDLLRRADAIFIEELHKADLYNKVSQAFTVFLPVRSVGVMGDGRKYDWVVSLRAVETIDFMTAHWAHLPYDFLGRVSNRIINEVDGISRVVYDISGKPPATIEWE.

A Glutamine amidotransferase type-1 domain is found at 8–207; it reads KILILDFGSQ…AVAICGCGTN (200 aa). The Nucleophile role is filled by Cys-85. Catalysis depends on residues His-181 and Glu-183. Residues 208–400 form the GMPS ATP-PPase domain; the sequence is WKPSSIIEDA…LGLPYNMLYR (193 aa). 235–241 is an ATP binding site; the sequence is SGGVDSS.

In terms of assembly, homodimer.

It carries out the reaction XMP + L-glutamine + ATP + H2O = GMP + L-glutamate + AMP + diphosphate + 2 H(+). It participates in purine metabolism; GMP biosynthesis; GMP from XMP (L-Gln route): step 1/1. Its function is as follows. Catalyzes the synthesis of GMP from XMP. The chain is GMP synthase [glutamine-hydrolyzing] from Shewanella denitrificans (strain OS217 / ATCC BAA-1090 / DSM 15013).